Here is a 269-residue protein sequence, read N- to C-terminus: Arginine and glutamate-rich protein 1-B (269 aa).

Residues methionine 1–serine 57 are compositionally biased toward basic residues. Residues methionine 1–arginine 70 form a necessary and sufficient for RNA binding region. Disordered stretches follow at residues methionine 1–glutamine 109 and arginine 233–glutamate 269. 3 stretches are compositionally biased toward basic and acidic residues: residues serine 64–isoleucine 80, serine 89–glutamine 109, and arginine 233–lysine 249. The segment at alanine 71–glutamate 269 is necessary and sufficient for transcriptional regulation.

This sequence belongs to the ARGLU1 family.

The protein localises to the nucleus. It is found in the nucleus speckle. Its subcellular location is the chromosome. Dual function regulator of gene expression; regulator of transcription and modulator of alternative splicing. General coactivator of nuclear receptor-induced gene expression. In Danio rerio (Zebrafish), this protein is Arginine and glutamate-rich protein 1-B (arglu1b).